The chain runs to 467 residues: Venom prothrombin activator pseutarin-C catalytic subunit (467 aa).

An N-terminal signal peptide occupies residues Met-1–Ser-22. Residues Asn-23–Arg-40 constitute a propeptide that is removed on maturation. The Gla domain occupies Ala-41–Asp-86. 4-carboxyglutamate occurs at positions 46, 47, 54, 56, 59, 60, 65, 66, 69, and 72. The cysteines at positions 57 and 62 are disulfide-linked. Residues Asp-86–Glu-122 enclose the EGF-like 1; calcium-binding domain. 11 cysteine pairs are disulfide-bonded: Cys-90–Cys-101, Cys-95–Cys-110, Cys-112–Cys-121, Cys-129–Cys-140, Cys-136–Cys-149, Cys-151–Cys-164, Cys-172–Cys-329, Cys-216–Cys-221, Cys-236–Cys-252, Cys-377–Cys-391, and Cys-402–Cys-430. A glycan (O-linked (Hex...) serine) is linked at Ser-92. One can recognise an EGF-like 2 domain in the interval Cys-129–Cys-164. Residues Arg-182–Arg-209 constitute a propeptide, activation peptide. The region spanning Ile-210–Arg-454 is the Peptidase S1 domain. His-251 (charge relay system) is an active-site residue. N-linked (GlcNAc...) asparagine glycosylation is present at Asn-254. Residue Asp-309 is the Charge relay system of the active site. The active-site Charge relay system is the Ser-406.

Belongs to the peptidase S1 family. Snake venom subfamily. Heterodimer of a light and a heavy chains; disulfide-linked. Is associated with pseutarin-C non-catalytic subunit (AC Q7SZN0) in a non-covalent manner. Gamma-carboxyglutamate residues are formed by vitamin K dependent carboxylation. These residues are essential for the binding of calcium. As to expression, expressed by the venom gland.

It localises to the secreted. It catalyses the reaction Selective cleavage of Arg-|-Thr and then Arg-|-Ile bonds in prothrombin to form thrombin.. With respect to regulation, activated by calcium and negatively charged phospholipids. Snake prothrombin activator that attacks the hemostatic system of prey. This non-catalytic subunit is functionally similar to blood coagulation factor V. It serves as a critical cofactor for the prothrombinase activity of the catalytic subunit, which is similar to the blood coagulation factor X. The complex converts prothrombin to thrombin by sequential cleavage at two positions, Arg-320 followed by Arg-271. Cleavage at Arg-320 produces an active intermediate known as meizothrombin. Meizothrombin is the 'second' substrate for prothrombinase, and it docks in an altered manner to present the second cleavage site (271). Cleavage at Arg-271 releases active thrombin from its pro-fragment. This order of events is reversed if the protease component of prothrombinase is used on its own, suggesting that the 271 site is inherently more accessible to proteolysis. The complex converts prothrombin to thrombin in presence but also in the absence of membrane. This Pseudonaja textilis (Eastern brown snake) protein is Venom prothrombin activator pseutarin-C catalytic subunit.